We begin with the raw amino-acid sequence, 321 residues long: Lipoyl synthase (321 aa).

Residues cysteine 60, cysteine 65, cysteine 71, cysteine 86, cysteine 90, cysteine 93, and serine 299 each coordinate [4Fe-4S] cluster. A Radical SAM core domain is found at 72–288 (WEKKHATFMI…ETIGRTKGFL (217 aa)).

Belongs to the radical SAM superfamily. Lipoyl synthase family. [4Fe-4S] cluster is required as a cofactor.

It localises to the cytoplasm. The enzyme catalyses [[Fe-S] cluster scaffold protein carrying a second [4Fe-4S](2+) cluster] + N(6)-octanoyl-L-lysyl-[protein] + 2 oxidized [2Fe-2S]-[ferredoxin] + 2 S-adenosyl-L-methionine + 4 H(+) = [[Fe-S] cluster scaffold protein] + N(6)-[(R)-dihydrolipoyl]-L-lysyl-[protein] + 4 Fe(3+) + 2 hydrogen sulfide + 2 5'-deoxyadenosine + 2 L-methionine + 2 reduced [2Fe-2S]-[ferredoxin]. It participates in protein modification; protein lipoylation via endogenous pathway; protein N(6)-(lipoyl)lysine from octanoyl-[acyl-carrier-protein]: step 2/2. In terms of biological role, catalyzes the radical-mediated insertion of two sulfur atoms into the C-6 and C-8 positions of the octanoyl moiety bound to the lipoyl domains of lipoate-dependent enzymes, thereby converting the octanoylated domains into lipoylated derivatives. The chain is Lipoyl synthase from Mesorhizobium japonicum (strain LMG 29417 / CECT 9101 / MAFF 303099) (Mesorhizobium loti (strain MAFF 303099)).